The chain runs to 855 residues: Protein KRI1 homolog (855 aa).

Disordered regions lie at residues 47–67 (VSESEFDSDSSSSEEDEVDPK), 82–117 (KDPCIYDKGTKFFSESSGDEDDKDGEAPKKKKKAKP), 130–196 (EHNG…KTKE), 312–342 (SLRRTDDKRKEKRKELKERKDQEKQQKMKEL), 424–453 (YDPRQHANGGGEDYEGHCEDDDFNMDCDYD), and 589–855 (KSLY…KKDN). The segment covering 48–64 (SESEFDSDSSSSEEDEV) has biased composition (acidic residues). Residues 82-91 (KDPCIYDKGT) are compositionally biased toward basic and acidic residues. Phosphoserine occurs at positions 95, 97, 98, 137, and 138. Over residues 160–176 (EEERRLKAEFRKVMNKE) the composition is skewed to basic and acidic residues. Phosphoserine is present on serine 179. A coiled-coil region spans residues 307 to 362 (RTIEQSLRRTDDKRKEKRKELKERKDQEKQQKMKELELVKEMKRKEIDEKIRKLKA). Residues 441 to 452 (CEDDDFNMDCDY) show a composition bias toward acidic residues. Low complexity predominate over residues 609–619 (VTPAEATAPAE). The segment covering 630–640 (KSKRKRLKRKA) has biased composition (basic residues). 2 stretches are compositionally biased toward basic and acidic residues: residues 650-664 (VLKEESDSKDPKEAD) and 674-692 (SSKKKVDTPSKKGKDDANQ). 3 stretches are compositionally biased toward polar residues: residues 720–748 (VQNGFQKPQNQANKSAKTKSNQPFKTTES), 756–773 (SNGNNPFNKPQSKSQQRQ), and 792–805 (ANGTNPFKKSNQKP). Residues 812–826 (KKTNNFKAKNKQNNN) show a composition bias toward low complexity. The segment covering 842 to 855 (RKFHKREKYGKKDN) has biased composition (basic residues).

This sequence belongs to the KRI1 family.

This Drosophila melanogaster (Fruit fly) protein is Protein KRI1 homolog.